The chain runs to 199 residues: Ribonuclease HII (199 aa).

Positions 10-199 (HLVAGVDEVG…VKRALGLASN (190 aa)) constitute an RNase H type-2 domain. A divalent metal cation-binding residues include aspartate 16, glutamate 17, and aspartate 108.

The protein belongs to the RNase HII family. The cofactor is Mn(2+). Mg(2+) serves as cofactor.

The protein localises to the cytoplasm. The enzyme catalyses Endonucleolytic cleavage to 5'-phosphomonoester.. In terms of biological role, endonuclease that specifically degrades the RNA of RNA-DNA hybrids. This is Ribonuclease HII from Klebsiella pneumoniae (strain 342).